A 597-amino-acid polypeptide reads, in one-letter code: Nucleolar protein 58 (597 aa).

Residues 285–410 (IAPNMTELVG…LENNLRQLEG (126 aa)) enclose the Nop domain. The disordered stretch occupies residues 452 to 597 (AEAPKKPLIQ…KKKKKKSSKE (146 aa)). Residues 482–499 (KSKKDKKEKKEKKDKKAK) show a composition bias toward basic residues. A compositionally biased stretch (basic and acidic residues) spans 532 to 551 (IKEDGTLEILSKKDFKGKDA). The span at 552–561 (EAEEEAEEEE) shows a compositional bias: acidic residues. The span at 588–597 (KKKKKKSSKE) shows a compositional bias: basic residues.

Belongs to the NOP5/NOP56 family.

The protein localises to the nucleus. It localises to the nucleolus. Required for pre-18S rRNA processing. May bind microtubules. This Neurospora crassa (strain ATCC 24698 / 74-OR23-1A / CBS 708.71 / DSM 1257 / FGSC 987) protein is Nucleolar protein 58 (nop-58).